The sequence spans 469 residues: Ubiquitin carboxyl-terminal hydrolase MINDY-1 (469 aa).

A disordered region spans residues 1–85 (MEHHQPEDPA…APPGPTLGTL (85 aa)). Residues 34 to 53 (HPQDTDARDADGEAGEREPA) are compositionally biased toward basic and acidic residues. Ser-103 is subject to Phosphoserine. Cys-137 functions as the Nucleophile in the catalytic mechanism. The active-site Proton acceptor is the His-319. The segment at 388-426 (QVDQDYLIALSLQQQQPRGTLGLTDLELAQQLQQEEYQQ) is ubiquitin-binding domain (UBD). Residues 428 to 469 (QAAQPVWMRTRALSPQGRGATSGRPAGERRQRPKHESDCILL) are disordered. The residue at position 441 (Ser-441) is a Phosphoserine. Residues 453–469 (AGERRQRPKHESDCILL) show a composition bias toward basic and acidic residues.

Belongs to the MINDY deubiquitinase family. FAM63 subfamily.

The catalysed reaction is Thiol-dependent hydrolysis of ester, thioester, amide, peptide and isopeptide bonds formed by the C-terminal Gly of ubiquitin (a 76-residue protein attached to proteins as an intracellular targeting signal).. In terms of biological role, hydrolase that can specifically remove 'Lys-48'-linked conjugated ubiquitin from proteins. Has exodeubiquitinase activity and has a preference for long polyubiquitin chains. May play a regulatory role at the level of protein turnover. The sequence is that of Ubiquitin carboxyl-terminal hydrolase MINDY-1 (MINDY1) from Pongo abelii (Sumatran orangutan).